The chain runs to 87 residues: Large ribosomal subunit protein bL27 (87 aa).

The tract at residues 1-20 (MAHKKAGGSSRNGRDSESKR) is disordered.

Belongs to the bacterial ribosomal protein bL27 family.

This Thiobacillus denitrificans (strain ATCC 25259 / T1) protein is Large ribosomal subunit protein bL27.